A 152-amino-acid polypeptide reads, in one-letter code: Small ribosomal subunit protein uS13 (152 aa).

It belongs to the universal ribosomal protein uS13 family.

Its subcellular location is the cytoplasm. In terms of biological role, located at the top of the head of the 40S subunit, it contacts several helices of the 18S rRNA. The chain is Small ribosomal subunit protein uS13 (RPS18) from Argopecten irradians (Bay scallop).